Here is an 84-residue protein sequence, read N- to C-terminus: Putative membrane protein insertion efficiency factor (84 aa).

Belongs to the UPF0161 family.

Its subcellular location is the cell inner membrane. Could be involved in insertion of integral membrane proteins into the membrane. This chain is Putative membrane protein insertion efficiency factor, found in Shewanella denitrificans (strain OS217 / ATCC BAA-1090 / DSM 15013).